Reading from the N-terminus, the 445-residue chain is Putative H/ACA ribonucleoprotein complex subunit 4 (445 aa).

The segment at 1-32 is disordered; that stretch reads MGKKDKRSKLEGDDLAEAQQKGSFQLPSSNET. The segment covering 20-32 has biased composition (polar residues); that stretch reads QKGSFQLPSSNET. The Nucleophile role is filled by D113. The PUA domain maps to 284 to 359; sequence HKRVVVKDSC…VVAKSKRVIM (76 aa). The interval 386-445 is disordered; sequence LDKFGKPNDTTPKSWAKEYVQTSTKKEVKKEETPDEEEEEAPKKKSKKSKKQESSDSDSD.

This sequence belongs to the pseudouridine synthase TruB family. In terms of assembly, component of the small nucleolar ribonucleoprotein particle containing H/ACA-type snoRNAs (H/ACA snoRNPs).

It is found in the nucleus. The protein resides in the nucleolus. The catalysed reaction is a uridine in RNA = a pseudouridine in RNA. In terms of biological role, plays a central role in ribosomal RNA processing. Probable catalytic subunit of H/ACA small nucleolar ribonucleoprotein (H/ACA snoRNP) complex, which catalyzes pseudouridylation of rRNA. This involves the isomerization of uridine such that the ribose is subsequently attached to C5, instead of the normal N1. Pseudouridine ('psi') residues may serve to stabilize the conformation of rRNAs. The protein is Putative H/ACA ribonucleoprotein complex subunit 4 of Caenorhabditis elegans.